We begin with the raw amino-acid sequence, 301 residues long: Rhodopsin (301 aa).

Residues 1-18 (LHMIHLHWYQYPPMNPMM) lie on the Extracellular side of the membrane. Residues 19–43 (YPLLLIFMLFTGILCLAGNFVTIWV) traverse the membrane as a helical segment. Over 44–55 (FMNTKSLRTPAN) the chain is Cytoplasmic. A helical transmembrane segment spans residues 56–78 (LLVVNLAMSDFLMMFTMFPPMMV). The Extracellular segment spans residues 79 to 92 (TCYYHTWTLGPTFC). Residues Cys-92 and Cys-169 are joined by a disulfide bond. A helical membrane pass occupies residues 93 to 115 (QVYAFLGNLCGCASIWTMVFITF). Residues 116 to 118 (DRY) carry the 'Ionic lock' involved in activated form stabilization motif. At 116–134 (DRYNVIVKGVAGEPLSNKK) the chain is on the cytoplasmic side. The chain crosses the membrane as a helical span at residues 135 to 155 (AAMWILSVWVLSTAWCMAPFF). Topologically, residues 156–182 (GWNSYVPEGNLTGCGTDYLSEDILSRS) are extracellular. N-linked (GlcNAc...) asparagine glycosylation is present at Asn-165. The helical transmembrane segment at 183–204 (YLYIYSTWVYFLPLTITIYCYV) threads the bilayer. The Cytoplasmic segment spans residues 205 to 245 (FIIKAVAAHEKGMRDQAKKMGIKSLRNEEAQKTSAECRLAK). A helical membrane pass occupies residues 246–267 (IAMTTVALWFIAWTPYLLINWV). The Extracellular portion of the chain corresponds to 268–278 (GMFARSYLSPV). A helical transmembrane segment spans residues 279 to 300 (YTIWGYVFAKANAVYNPIVYAI). Lys-288 is subject to N6-(retinylidene)lysine.

Belongs to the G-protein coupled receptor 1 family. Opsin subfamily. In terms of assembly, homodimer. Interacts with GNAQ. Contains one covalently linked retinal chromophore.

Its subcellular location is the cell projection. The protein resides in the rhabdomere membrane. Its function is as follows. Photoreceptor required for image-forming vision at low light intensity. Can use both retinal and 3-dehydroretinal as visual pigment. Light-induced isomerization of 11-cis to all-trans retinal triggers a conformational change that activates signaling via G-proteins. Signaling via GNAQ probably mediates the activation of phospholipase C. In Faxonius virilis (Virile crayfish), this protein is Rhodopsin (RHO).